The primary structure comprises 321 residues: PI-PLC X domain-containing protein 3 (321 aa).

Residues Ser-22–Ser-197 form the PI-PLC X-box domain. Catalysis depends on residues His-37 and His-114.

Widely expressed, with highest levels in brain, followed by heart atrium. Not detected in small intestine, nor stomach.

Its subcellular location is the cytoplasm. The sequence is that of PI-PLC X domain-containing protein 3 (Plcxd3) from Mus musculus (Mouse).